A 252-amino-acid polypeptide reads, in one-letter code: Cell division protein ZapD (252 aa).

Belongs to the ZapD family. In terms of assembly, interacts with FtsZ.

It localises to the cytoplasm. Cell division factor that enhances FtsZ-ring assembly. Directly interacts with FtsZ and promotes bundling of FtsZ protofilaments, with a reduction in FtsZ GTPase activity. The chain is Cell division protein ZapD from Cupriavidus metallidurans (strain ATCC 43123 / DSM 2839 / NBRC 102507 / CH34) (Ralstonia metallidurans).